The following is a 194-amino-acid chain: uncharacterized protein (194 aa).

Residues 62 to 93 (GGAGRRTSKAQRVHPQPSHQRQPPPPQHPGPY) are disordered.

As to expression, expressed most abundantly in the brain at protein level. Present in cortex, cerebellum and midbrain. Found in neurons. Elevated expressions detected in Alzheimer brain samples. Also expressed in testis.

Its subcellular location is the cytoplasm. This is an uncharacterized protein from Homo sapiens (Human).